A 125-amino-acid polypeptide reads, in one-letter code: Small ribosomal subunit protein uS13 (125 aa).

Over residues 94–116 (GLPVRGQRTRTNARTRKGPRKAV) the composition is skewed to basic residues. The tract at residues 94–125 (GLPVRGQRTRTNARTRKGPRKAVRASSAKAGR) is disordered.

The protein belongs to the universal ribosomal protein uS13 family. In terms of assembly, part of the 30S ribosomal subunit. Forms a loose heterodimer with protein S19. Forms two bridges to the 50S subunit in the 70S ribosome.

Located at the top of the head of the 30S subunit, it contacts several helices of the 16S rRNA. In the 70S ribosome it contacts the 23S rRNA (bridge B1a) and protein L5 of the 50S subunit (bridge B1b), connecting the 2 subunits; these bridges are implicated in subunit movement. Contacts the tRNAs in the A and P-sites. The protein is Small ribosomal subunit protein uS13 of Nitrosospira multiformis (strain ATCC 25196 / NCIMB 11849 / C 71).